A 104-amino-acid chain; its full sequence is Protein translation factor SUI1 homolog (104 aa).

This sequence belongs to the SUI1 family.

This is Protein translation factor SUI1 homolog from Ignicoccus hospitalis (strain KIN4/I / DSM 18386 / JCM 14125).